Reading from the N-terminus, the 329-residue chain is Cysteine synthase (329 aa).

Lys48 is modified (N6-(pyridoxal phosphate)lysine). Pyridoxal 5'-phosphate-binding positions include Asn78, 183-187 (GTGGT), and Ser278.

This sequence belongs to the cysteine synthase/cystathionine beta-synthase family. Homodimer. Pyridoxal 5'-phosphate serves as cofactor.

The enzyme catalyses O-acetyl-L-serine + hydrogen sulfide = L-cysteine + acetate. The protein operates within amino-acid biosynthesis; L-cysteine biosynthesis; L-cysteine from L-serine: step 2/2. Its function is as follows. Catalyzes the conversion of O-acetylserine (OAS) to cysteine through the elimination of acetate and addition of hydrogen sulfide. The polypeptide is Cysteine synthase (srpG) (Synechococcus elongatus (strain ATCC 33912 / PCC 7942 / FACHB-805) (Anacystis nidulans R2)).